Reading from the N-terminus, the 255-residue chain is Pyrroloquinoline-quinone synthase (255 aa).

The protein belongs to the PqqC family.

It catalyses the reaction 6-(2-amino-2-carboxyethyl)-7,8-dioxo-1,2,3,4,7,8-hexahydroquinoline-2,4-dicarboxylate + 3 O2 = pyrroloquinoline quinone + 2 H2O2 + 2 H2O + H(+). It functions in the pathway cofactor biosynthesis; pyrroloquinoline quinone biosynthesis. In terms of biological role, ring cyclization and eight-electron oxidation of 3a-(2-amino-2-carboxyethyl)-4,5-dioxo-4,5,6,7,8,9-hexahydroquinoline-7,9-dicarboxylic-acid to PQQ. The chain is Pyrroloquinoline-quinone synthase from Acinetobacter baylyi (strain ATCC 33305 / BD413 / ADP1).